The following is a 501-amino-acid chain: Neuronal acetylcholine receptor subunit beta-2 (501 aa).

The N-terminal stretch at 1-25 (MARCSNSMALLFSFGLLWLCSGVLG) is a signal peptide. The Extracellular segment spans residues 26 to 238 (TDTEERLVEH…IIRRKPLFYT (213 aa)). 2 N-linked (GlcNAc...) asparagine glycosylation sites follow: Asn-51 and Asn-168. Cys-155 and Cys-169 form a disulfide bridge. The helical transmembrane segment at 239–259 (INLIIPCVLITSLAILVFYLP) threads the bilayer. At 260–267 (SDCGEKMT) the chain is on the cytoplasmic side. A helical membrane pass occupies residues 268–288 (LCISVLLALTVFLLLISKIVP). Topologically, residues 289 to 300 (PTSLDVPLVGKY) are extracellular. The chain crosses the membrane as a helical span at residues 301–321 (LMFTMVLVTFSIVTSVCVLNV). Residues 322–459 (HHRSPTTHTM…WKYVAMVIDR (138 aa)) lie on the Cytoplasmic side of the membrane. Residues 460–480 (LFLWIFVFVCVFGTIGMFLQP) form a helical membrane-spanning segment.

This sequence belongs to the ligand-gated ion channel (TC 1.A.9) family. Acetylcholine receptor (TC 1.A.9.1) subfamily. Beta-2/CHRNB2 sub-subfamily. As to quaternary structure, neuronal AChR is a heteropentamer composed of two different types of subunits: alpha and beta. CHRNB2/Beta-2 subunit can be combined to CHRNA2/alpha-2, CHRNA3/alpha-3 or CHRNA4/alpha-4, CHRNA5/alpha-5, CHRNA6/alpha-6 and CHRNB3/beta-3 to give rise to functional receptors. CHRNA2:CHRNB2 and CHRNA4:CHRNB2 nAChR complexes exist in two subtypes: LS (low agonist sensitivity) with a (CHRNA2/4)3:(CHRNB2)2 and HS (high agonist sensitivity) with a (CHRNA2/4)2:(CHRNB2)3 stoichiometry; the subtypes differ in their subunit binding interfaces which are involved in ligand binding. Cells produce predominantly an (CHRNA4)3:(CHRNB2)2 nAChR. The stoichiometric form (CHRNA4)2:(CHRNB2)3 expression is selectively up-regulated by nicotine and has lower single channel conductance and calcium permeability. Also part of the stoichiometric forms: (CHRNA4:CHRNB2)2:CHRNB3 or (CHRNA6:CHRNB2)2:CHRNB3. Can form heteropentamers with CHRNA7, mainly found in basal forebrain cholinergic neurons. Interacts with RIC3; which is required for proper folding and assembly. Interacts with LYPD6.

It is found in the synaptic cell membrane. It localises to the cell membrane. It catalyses the reaction K(+)(in) = K(+)(out). The catalysed reaction is Na(+)(in) = Na(+)(out). It carries out the reaction Ca(2+)(in) = Ca(2+)(out). With respect to regulation, activated by a myriad of ligands such as acetylcholine, cytisine, nicotine, choline and epibatidine. Channel potentiation by calcium is stoichiometry-selective, CHRNA4:CHRNB2 nACh receptor is achieved by calcium association with topographically distinct sites framed by anionic residues within the CHRNA4 subunit and between the CHRNA4 and CHRNB2 subunits. Oligomeric amyloid-beta protein 42 activates specifially CHRNA7:CHRNB2 nAchRs. nAChR activity is inhibited by the antagonist alpha-conotoxins BuIA, PnIA, PnIC, GID and MII, small disulfide-constrained peptides from cone snails. Component of neuronal acetylcholine receptors (nAChRs) that function as pentameric, ligand-gated cation channels with high calcium permeability among other activities. nAChRs are excitatory neurotrasnmitter receptors formed by a collection of nAChR subunits known to mediate synaptic transmission in the nervous system and the neuromuscular junction. Each nAchR subunit confers differential attributes to channel properties, including activation, deactivation and desensitization kinetics, pH sensitivity, cation permeability, and binding to allosteric modulators. CHRNB2 forms heteropentameric neuronal acetylcholine receptors with CHRNA2, CHRNA3, CHRNA4 and CHRNA6, as well as CHRNA5 and CHRNB3 as accesory subunits. Found in two major stoichiometric forms,(CHRNA4)3:(CHRNB2)2 and (CHRNA4)2:(CHRNB2)3, the two stoichiometric forms differ in their unitary conductance, calcium permeability, ACh sensitivity and potentiation by divalent cation. Heteropentameric channels with CHRNA6 and CHRNA4 exhibit high sensitivity to ACh and nicotine and are predominantly expressed in only a few brain areas, including dopaminergic neurons, norepirephrine neurons and cells of the visual system. nAChrs containing CHRNA6 subunits mediate endogenous cholinergic modulation of dopamine and gamma-aminobutyric acid (GABA) release in response to nicotine at nerve terminals. Also forms functional nAChRs with other subunits such as CHRNA7:CHRNB2, mainly expressed in basal forebrain cholinergic neurons. In Mus musculus (Mouse), this protein is Neuronal acetylcholine receptor subunit beta-2 (Chrnb2).